The sequence spans 486 residues: Cytosol aminopeptidase (486 aa).

Positions 249 and 254 each coordinate Zn(2+). Lys261 is a catalytic residue. Positions 272, 331, and 333 each coordinate Zn(2+). Residue Arg335 is part of the active site.

This sequence belongs to the peptidase M17 family. As to quaternary structure, homohexamer. Zn(2+) is required as a cofactor.

The protein localises to the cytoplasm. It carries out the reaction Release of an N-terminal amino acid, Xaa-|-Yaa-, in which Xaa is preferably Leu, but may be other amino acids including Pro although not Arg or Lys, and Yaa may be Pro. Amino acid amides and methyl esters are also readily hydrolyzed, but rates on arylamides are exceedingly low.. The catalysed reaction is Release of N-terminal proline from a peptide.. Presumably involved in the processing and regular turnover of intracellular proteins. Catalyzes the removal of unsubstituted N-terminal amino acids from various peptides. The polypeptide is Cytosol aminopeptidase (Encephalitozoon cuniculi (strain GB-M1) (Microsporidian parasite)).